Reading from the N-terminus, the 842-residue chain is Synaptonemal complex protein 2-like (842 aa).

Disordered stretches follow at residues Gly-451–Gln-473, Phe-505–Val-560, Ser-619–Glu-666, and Glu-715–Val-738. 2 stretches are compositionally biased toward basic and acidic residues: residues Thr-458 to Glu-470 and Phe-505 to Leu-525. Over residues Asn-543 to Arg-559 the composition is skewed to basic residues. Basic and acidic residues-rich tracts occupy residues Gly-624–Ser-633 and Arg-643–Ser-655.

Belongs to the SYCP2 family. Specifically expressed in oocytes.

Its subcellular location is the nucleus. It localises to the chromosome. It is found in the centromere. Oocyte-specific protein that localizes to centromeres at the dictyate stage and regulates the survival of primordial oocytes. The sequence is that of Synaptonemal complex protein 2-like from Mus musculus (Mouse).